The primary structure comprises 269 residues: Thiazole synthase (269 aa).

The active-site Schiff-base intermediate with DXP is the Lys109. 1-deoxy-D-xylulose 5-phosphate-binding positions include Gly170, 196 to 197, and 218 to 219; these read AG and NT.

The protein belongs to the ThiG family. As to quaternary structure, homotetramer. Forms heterodimers with either ThiH or ThiS.

It is found in the plastid. Its subcellular location is the chloroplast. The catalysed reaction is [ThiS sulfur-carrier protein]-C-terminal-Gly-aminoethanethioate + 2-iminoacetate + 1-deoxy-D-xylulose 5-phosphate = [ThiS sulfur-carrier protein]-C-terminal Gly-Gly + 2-[(2R,5Z)-2-carboxy-4-methylthiazol-5(2H)-ylidene]ethyl phosphate + 2 H2O + H(+). Its pathway is cofactor biosynthesis; thiamine diphosphate biosynthesis. Functionally, catalyzes the rearrangement of 1-deoxy-D-xylulose 5-phosphate (DXP) to produce the thiazole phosphate moiety of thiamine. Sulfur is provided by the thiocarboxylate moiety of the carrier protein ThiS. In vitro, sulfur can be provided by H(2)S. This Thalassiosira pseudonana (Marine diatom) protein is Thiazole synthase.